A 392-amino-acid chain; its full sequence is MPRSNYLFTSESVSEGHPDKVCDRISDTVVDAYLAAMPEARLGVETLATTNRIVIAGEVRGPDSVTFKDLEALTREAVKDIGYEQSGFHWKNNDVAIHLHAQSADIAQGVDAAGNKDEGAGDQGIMFGYAADETPELMPAPIFYAHKILKDLADARKARQGDAAKLGPDAKSQVTVRYENGRPVEVTQIVLSTQHLDESLDSADVRAIVEPYILKALPQGWVNEGTVWHVNPTGKFVIGGPDGDAGLTGRKIIVDTYGGAAPHGGGAFSGKDPTKVDRSAAYAARYLAKNVVAAGLASRATIQLAYAIGVSKPLSIYVDLHGTGTVDEAKLEAVLMDAMDLSPRGIRTALSLNKPIYARTSAYGHFGRAPEADGGFSWERTDLAGKLKSALA.

His-17 lines the ATP pocket. A Mg(2+)-binding site is contributed by Asp-19. K(+) is bound at residue Glu-45. The L-methionine site is built by Glu-58 and Gln-102. The interval 102 to 112 (QSADIAQGVDA) is flexible loop. ATP is bound by residues 169–171 (DAK), 235–236 (KF), Asp-244, 250–251 (RK), Ala-267, and Lys-271. Position 244 (Asp-244) interacts with L-methionine. Residue Lys-275 participates in L-methionine binding.

The protein belongs to the AdoMet synthase family. As to quaternary structure, homotetramer; dimer of dimers. Mg(2+) serves as cofactor. It depends on K(+) as a cofactor.

The protein resides in the cytoplasm. The enzyme catalyses L-methionine + ATP + H2O = S-adenosyl-L-methionine + phosphate + diphosphate. It participates in amino-acid biosynthesis; S-adenosyl-L-methionine biosynthesis; S-adenosyl-L-methionine from L-methionine: step 1/1. Catalyzes the formation of S-adenosylmethionine (AdoMet) from methionine and ATP. The overall synthetic reaction is composed of two sequential steps, AdoMet formation and the subsequent tripolyphosphate hydrolysis which occurs prior to release of AdoMet from the enzyme. The protein is S-adenosylmethionine synthase of Methylobacterium radiotolerans (strain ATCC 27329 / DSM 1819 / JCM 2831 / NBRC 15690 / NCIMB 10815 / 0-1).